The chain runs to 102 residues: Large ribosomal subunit protein bL21 (102 aa).

This sequence belongs to the bacterial ribosomal protein bL21 family. As to quaternary structure, part of the 50S ribosomal subunit. Contacts protein L20.

Its function is as follows. This protein binds to 23S rRNA in the presence of protein L20. This chain is Large ribosomal subunit protein bL21, found in Agathobacter rectalis (strain ATCC 33656 / DSM 3377 / JCM 17463 / KCTC 5835 / VPI 0990) (Eubacterium rectale).